The chain runs to 500 residues: Gamma-glutamylanilide synthase (500 aa).

Positions 32 to 136 constitute a GS beta-grasp domain; that stretch reads LGLEMIRLSW…MLADLHWKSG (105 aa). The GS catalytic domain maps to 143–500; that stretch reads PRGIMKKAVK…WEQKEYFNLL (358 aa).

The protein belongs to the glutamine synthetase family. In terms of assembly, homohexamer.

It catalyses the reaction aniline + L-glutamate + ATP = N(5)-phenyl-L-glutamine + ADP + phosphate. Involved in the initial oxidation of aniline to catechol by the release of its amino group. Catalyzes the ATP-dependent ligation of L-glutamate to aniline to yield gamma-glutamylanilide (gamma-GA). AtdA1 has a broad substrate range and is able to convert the following anilines, including chlorinated and methylated forms of aniline: aniline (100%), o-chloroaniline (92%), m-chloroaniline (69%), p-chloroaniline (92%), o-methylaniline (40%), m-methylaniline (27%) and p-methylaniline (45%). The protein is Gamma-glutamylanilide synthase of Acinetobacter sp.